The sequence spans 37 residues: Large ribosomal subunit protein bL36 (37 aa).

It belongs to the bacterial ribosomal protein bL36 family.

The sequence is that of Large ribosomal subunit protein bL36 from Borreliella afzelii (strain PKo) (Borrelia afzelii).